Reading from the N-terminus, the 229-residue chain is Large ribosomal subunit protein uL1 (229 aa).

The protein belongs to the universal ribosomal protein uL1 family. As to quaternary structure, part of the 50S ribosomal subunit.

Its function is as follows. Binds directly to 23S rRNA. The L1 stalk is quite mobile in the ribosome, and is involved in E site tRNA release. In terms of biological role, protein L1 is also a translational repressor protein, it controls the translation of the L11 operon by binding to its mRNA. This chain is Large ribosomal subunit protein uL1, found in Streptococcus agalactiae serotype Ia (strain ATCC 27591 / A909 / CDC SS700).